A 574-amino-acid chain; its full sequence is Membrane protein insertase YidC (574 aa).

6 helical membrane-spanning segments follow: residues 6 to 26, 350 to 370, 376 to 396, 447 to 467, 491 to 511, and 525 to 545; these read VFLIFAWLMVAALLWMEWGKE, VIDYSRFSIMAIIGQGLFWVL, FLHNWGWAIVGLVVLLRLVLY, GGCLPLLIQMPIFFALYWVLV, FILPALNIAIMWATQKLTPTP, and PLVFGAMMAFVPSGLVLYWVV.

It belongs to the OXA1/ALB3/YidC family. Type 1 subfamily. In terms of assembly, interacts with the Sec translocase complex via SecD. Specifically interacts with transmembrane segments of nascent integral membrane proteins during membrane integration.

Its subcellular location is the cell inner membrane. Required for the insertion and/or proper folding and/or complex formation of integral membrane proteins into the membrane. Involved in integration of membrane proteins that insert both dependently and independently of the Sec translocase complex, as well as at least some lipoproteins. Aids folding of multispanning membrane proteins. The chain is Membrane protein insertase YidC from Xanthomonas oryzae pv. oryzae (strain KACC10331 / KXO85).